A 398-amino-acid chain; its full sequence is UDP-N-acetylglucosamine--N-acetylmuramyl-(pentapeptide) pyrophosphoryl-undecaprenol N-acetylglucosamine transferase (398 aa).

UDP-N-acetyl-alpha-D-glucosamine-binding positions include 11 to 13, N124, R164, S192, and Q318; that span reads TGG.

It belongs to the glycosyltransferase 28 family. MurG subfamily.

It localises to the cell membrane. The catalysed reaction is di-trans,octa-cis-undecaprenyl diphospho-N-acetyl-alpha-D-muramoyl-L-alanyl-D-glutamyl-meso-2,6-diaminopimeloyl-D-alanyl-D-alanine + UDP-N-acetyl-alpha-D-glucosamine = di-trans,octa-cis-undecaprenyl diphospho-[N-acetyl-alpha-D-glucosaminyl-(1-&gt;4)]-N-acetyl-alpha-D-muramoyl-L-alanyl-D-glutamyl-meso-2,6-diaminopimeloyl-D-alanyl-D-alanine + UDP + H(+). Its pathway is cell wall biogenesis; peptidoglycan biosynthesis. Cell wall formation. Catalyzes the transfer of a GlcNAc subunit on undecaprenyl-pyrophosphoryl-MurNAc-pentapeptide (lipid intermediate I) to form undecaprenyl-pyrophosphoryl-MurNAc-(pentapeptide)GlcNAc (lipid intermediate II). This Deinococcus radiodurans (strain ATCC 13939 / DSM 20539 / JCM 16871 / CCUG 27074 / LMG 4051 / NBRC 15346 / NCIMB 9279 / VKM B-1422 / R1) protein is UDP-N-acetylglucosamine--N-acetylmuramyl-(pentapeptide) pyrophosphoryl-undecaprenol N-acetylglucosamine transferase.